The following is a 499-amino-acid chain: Calcium/calmodulin-dependent protein kinase type II subunit delta (499 aa).

An N-acetylalanine modification is found at Ala-2. A Protein kinase domain is found at 14-272; it reads YQLFEELGKG…ASEALKHPWI (259 aa). ATP is bound by residues 20 to 28 and Lys-43; that span reads LGKGAFSVV. Asp-136 serves as the catalytic Proton acceptor. An autoinhibitory domain region spans residues 283–292; sequence HRQETVDCLK. Thr-287 carries the post-translational modification Phosphothreonine; by autocatalysis. The interval 291–301 is calmodulin-binding; sequence LKKFNARRKLK. A phosphothreonine; by autocatalysis mark is found at Thr-306 and Thr-307. Phosphoserine is present on Ser-315. Lys-318 carries the N6-acetyllysine modification. 2 positions are modified to phosphoserine: Ser-319 and Ser-330. Position 331 is a phosphothreonine (Thr-331). A Phosphoserine modification is found at Ser-333. A phosphothreonine mark is found at Thr-336 and Thr-337. A phosphoserine mark is found at Ser-404, Ser-490, and Ser-494.

This sequence belongs to the protein kinase superfamily. CAMK Ser/Thr protein kinase family. CaMK subfamily. In terms of assembly, CAMK2 is composed of 4 different chains: alpha (CAMK2A), beta (CAMK2B), gamma (CAMK2G), and delta (CAMK2D). The different isoforms assemble into homo- or heteromultimeric holoenzymes composed of 12 subunits with two hexameric rings stacked one on top of the other. Interacts with RRAD and CACNB2. Autophosphorylation of Thr-287 following activation by Ca(2+)/calmodulin. Phosphorylation of Thr-287 locks the kinase into an activated state. As to expression, expressed in cardiac muscle and skeletal muscle. Isoform Delta 3, isoform Delta 2, isoform Delta 8 and isoform Delta 9 are expressed in cardiac muscle. Isoform Delta 11 is expressed in skeletal muscle.

It is found in the cell membrane. The protein resides in the sarcolemma. Its subcellular location is the sarcoplasmic reticulum membrane. It carries out the reaction L-seryl-[protein] + ATP = O-phospho-L-seryl-[protein] + ADP + H(+). The enzyme catalyses L-threonyl-[protein] + ATP = O-phospho-L-threonyl-[protein] + ADP + H(+). Its activity is regulated as follows. Activated by Ca(2+)/calmodulin. Binding of calmodulin results in conformational change that relieves intrasteric autoinhibition and allows autophosphorylation of Thr-287 which turns the kinase in a constitutively active form and confers to the kinase a Ca(2+)-independent activity. Its function is as follows. Calcium/calmodulin-dependent protein kinase involved in the regulation of Ca(2+) homeostatis and excitation-contraction coupling (ECC) in heart by targeting ion channels, transporters and accessory proteins involved in Ca(2+) influx into the myocyte, Ca(2+) release from the sarcoplasmic reticulum (SR), SR Ca(2+) uptake and Na(+) and K(+) channel transport. Targets also transcription factors and signaling molecules to regulate heart function. In its activated form, is involved in the pathogenesis of dilated cardiomyopathy and heart failure. Contributes to cardiac decompensation and heart failure by regulating SR Ca(2+) release via direct phosphorylation of RYR2 Ca(2+) channel on 'Ser-2808'. In the nucleus, phosphorylates the MEF2 repressor HDAC4, promoting its nuclear export and binding to 14-3-3 protein, and expression of MEF2 and genes involved in the hypertrophic program. Is essential for left ventricular remodeling responses to myocardial infarction. In pathological myocardial remodeling acts downstream of the beta adrenergic receptor signaling cascade to regulate key proteins involved in ECC. Regulates Ca(2+) influx to myocytes by binding and phosphorylating the L-type Ca(2+) channel subunit beta-2 CACNB2. In addition to Ca(2+) channels, can target and regulate the cardiac sarcolemmal Na(+) channel Nav1.5/SCN5A and the K+ channel Kv4.3/KCND3, which contribute to arrhythmogenesis in heart failure. Phosphorylates phospholamban (PLN/PLB), an endogenous inhibitor of SERCA2A/ATP2A2, contributing to the enhancement of SR Ca(2+) uptake that may be important in frequency-dependent acceleration of relaxation (FDAR) and maintenance of contractile function during acidosis. May participate in the modulation of skeletal muscle function in response to exercise, by regulating SR Ca(2+) transport through phosphorylation of PLN/PLB and triadin, a ryanodine receptor-coupling factor. In response to interferon-gamma (IFN-gamma) stimulation, catalyzes phosphorylation of STAT1, stimulating the JAK-STAT signaling pathway. This is Calcium/calmodulin-dependent protein kinase type II subunit delta (CAMK2D) from Homo sapiens (Human).